We begin with the raw amino-acid sequence, 203 residues long: MGVRFSWGTEVRKLDVEGDKVRGVVTNWERLAADAVVVALGSYSPLLLKRHGIKLPVYPVKGYSLTIPITDASRAPESTIMDETYKIAITRLGDRIRVGGMAEISGYTNDLGPARRRTLEHSVMDLFPGGDAKEASYWSGLRPMTPDGTPVIGPTKIAGLFLNTGHGTLGWTMSSGSARVIADLVSGRKPEIDATDLAVSRYA.

Belongs to the DadA oxidoreductase family.

Functionally, either a functional dehydrogenase or a non-functional fragment. This is an uncharacterized protein from Sinorhizobium fredii (strain NBRC 101917 / NGR234).